The sequence spans 60 residues: uncharacterized protein (60 aa).

This is an uncharacterized protein from Dryophytes versicolor (chameleon treefrog).